The primary structure comprises 198 residues: Recombination protein RecR (198 aa).

The C4-type zinc finger occupies 57 to 72; it reads CAMCNTFTESAVCETC. A Toprim domain is found at 80–175; the sequence is ALLCVVETPG…KVSRLARGVP (96 aa).

This sequence belongs to the RecR family.

In terms of biological role, may play a role in DNA repair. It seems to be involved in an RecBC-independent recombinational process of DNA repair. It may act with RecF and RecO. The polypeptide is Recombination protein RecR (Herminiimonas arsenicoxydans).